A 167-amino-acid polypeptide reads, in one-letter code: Outer envelope pore protein 21A, chloroplastic (167 aa).

The Cytoplasmic portion of the chain corresponds to 1 to 21 (METSLRYATNSRSLKIHAKEK). Residues 22-31 (FPVNSKTRLQ) traverse the membrane as a beta stranded segment. Topologically, residues 32–55 (LHGELDTGAGVPSYFCAMIRYFFH) are chloroplast intermembrane. A beta stranded transmembrane segment spans residues 56–65 (EASTNLGVGL). Residues 66–71 (HYDKRE) lie on the Cytoplasmic side of the membrane. A beta stranded membrane pass occupies residues 72–81 (KLRCLVRGKK). Topologically, residues 82-87 (KFPVIT) are chloroplast intermembrane. Residues 88-97 (DEVVTFNIKG) form a beta stranded membrane-spanning segment. The Cytoplasmic portion of the chain corresponds to 98–110 (RCDFDQDLVQRNA). The beta stranded transmembrane segment at 111–120 (KGAAEFDWNI) threads the bilayer. Residues 121–127 (WKFQKDQ) are Chloroplast intermembrane-facing. Residues 128–137 (DLRLRIGYEM) traverse the membrane as a beta stranded segment. Residues 138–142 (FEKVP) lie on the Cytoplasmic side of the membrane. Residues 143–152 (YMQIRENNWT) form a beta stranded membrane-spanning segment. Residues 153–158 (FNTNLK) are Chloroplast intermembrane-facing. Residues 159 to 167 (GKWNVRYDL) form a beta stranded membrane-spanning segment.

The protein belongs to the plastid outer envelope porin OEP21 (TC 1.B.29) family.

It localises to the plastid. Its subcellular location is the etioplast membrane. The protein localises to the chloroplast outer membrane. Its function is as follows. Voltage-dependent rectifying anion channel that facilitates the translocation between chloroplast and cytoplasm of phosphorylated carbohydrates such as triosephosphate, 3-phosphoglycerate and inorganic phosphate (Pi) depending of ATP to triosephosphate ratio in the plastidial intermembrane space; in high triosephosphate/ATP conditions (e.g. photosynthesis), export of triosphosphate from chloroplast (outward rectifying channels), but in high ATP/triosephosphate conditions (e.g. dark phase), import of phosphosolutes (inward rectifying channels). The polypeptide is Outer envelope pore protein 21A, chloroplastic (OEP21A) (Arabidopsis thaliana (Mouse-ear cress)).